The sequence spans 163 residues: uncharacterized protein (163 aa).

The segment at 142-163 is disordered; the sequence is PQIVISEHNNTKETSPSRQFEH. Over residues 153-163 the composition is skewed to polar residues; that stretch reads KETSPSRQFEH.

Belongs to the RCAN family.

Its function is as follows. Inhibits calcineurin-dependent transcriptional responses by binding to the catalytic domain of calcineurin. This is an uncharacterized protein from Schizosaccharomyces pombe (strain 972 / ATCC 24843) (Fission yeast).